The sequence spans 316 residues: UDP-N-acetylenolpyruvoylglucosamine reductase (316 aa).

One can recognise an FAD-binding PCMH-type domain in the interval 27-225 (VGGKAERFYR…KTAINALLKK (199 aa)). Arginine 190 is a catalytic residue. Serine 239 functions as the Proton donor in the catalytic mechanism. Glutamate 309 is a catalytic residue.

This sequence belongs to the MurB family. Requires FAD as cofactor.

It localises to the cytoplasm. It catalyses the reaction UDP-N-acetyl-alpha-D-muramate + NADP(+) = UDP-N-acetyl-3-O-(1-carboxyvinyl)-alpha-D-glucosamine + NADPH + H(+). It functions in the pathway cell wall biogenesis; peptidoglycan biosynthesis. Its function is as follows. Cell wall formation. In Coxiella burnetii (strain CbuK_Q154) (Coxiella burnetii (strain Q154)), this protein is UDP-N-acetylenolpyruvoylglucosamine reductase.